Reading from the N-terminus, the 185-residue chain is Probable chorismate pyruvate-lyase 1 (185 aa).

Arg-68, Leu-106, and Glu-164 together coordinate substrate.

The protein belongs to the UbiC family.

Its subcellular location is the cytoplasm. It catalyses the reaction chorismate = 4-hydroxybenzoate + pyruvate. The protein operates within cofactor biosynthesis; ubiquinone biosynthesis. Removes the pyruvyl group from chorismate, with concomitant aromatization of the ring, to provide 4-hydroxybenzoate (4HB) for the ubiquinone pathway. The protein is Probable chorismate pyruvate-lyase 1 of Pseudomonas entomophila (strain L48).